The primary structure comprises 376 residues: uncharacterized protein (376 aa).

Residues 1–28 form the signal peptide; it reads MCKPRVWRIAHTIVHVGALLLGTSQLTT. The N-palmitoyl cysteine moiety is linked to residue cysteine 29. The S-diacylglycerol cysteine moiety is linked to residue cysteine 29.

This sequence belongs to the TP013X lipoprotein family.

It is found in the cell membrane. This is an uncharacterized protein from Treponema pallidum (strain Nichols).